The chain runs to 309 residues: Phytoene synthase (309 aa).

This sequence belongs to the phytoene/squalene synthase family.

It catalyses the reaction 2 (2E,6E,10E)-geranylgeranyl diphosphate = 15-cis-phytoene + 2 diphosphate. Its pathway is carotenoid biosynthesis; phytoene biosynthesis; all-trans-phytoene from geranylgeranyl diphosphate: step 1/1. Its function is as follows. Catalyzes the reaction from prephytoene diphosphate to phytoene. The protein is Phytoene synthase (crtB) of Arthrospira platensis (Spirulina platensis).